The sequence spans 336 residues: F420-dependent glucose-6-phosphate dehydrogenase (336 aa).

Coenzyme F420-(gamma-Glu)n is bound at residue aspartate 39. The active-site Proton donor is the histidine 40. Coenzyme F420-(gamma-Glu)n-binding positions include threonine 76 and 107–108 (SG). Residue glutamate 109 is the Proton acceptor of the active site. Coenzyme F420-(gamma-Glu)n is bound by residues asparagine 112, 177–178 (GG), and 180–181 (VV). Substrate is bound by residues threonine 195, lysine 198, lysine 259, and arginine 283.

This sequence belongs to the F420-dependent glucose-6-phosphate dehydrogenase family. Homodimer.

It carries out the reaction oxidized coenzyme F420-(gamma-L-Glu)(n) + D-glucose 6-phosphate + H(+) = 6-phospho-D-glucono-1,5-lactone + reduced coenzyme F420-(gamma-L-Glu)(n). Catalyzes the coenzyme F420-dependent oxidation of glucose 6-phosphate (G6P) to 6-phosphogluconolactone. The protein is F420-dependent glucose-6-phosphate dehydrogenase of Tsukamurella paurometabola (strain ATCC 8368 / DSM 20162 / CCUG 35730 / CIP 100753 / JCM 10117 / KCTC 9821 / NBRC 16120 / NCIMB 702349 / NCTC 13040) (Corynebacterium paurometabolum).